Reading from the N-terminus, the 892-residue chain is Translation initiation factor IF-2 (892 aa).

Residues 88 to 306 are disordered; it reads KKRTFVKRDP…LQQGFQKPAQ (219 aa). Basic and acidic residues-rich tracts occupy residues 93–159 and 166–216; these read VKRD…KDKV and DMIK…EENK. The span at 254–269 shows a compositional bias: basic residues; sequence GRGRNAKAARPAKKGK. The segment covering 270-282 has biased composition (basic and acidic residues); sequence HAESKADREEARA. The tr-type G domain occupies 391-560; sequence PRAPVVTIMG…LLQAEVLELK (170 aa). A G1 region spans residues 400–407; that stretch reads GHVDHGKT. GTP is bound at residue 400-407; sequence GHVDHGKT. The interval 425–429 is G2; sequence GITQH. The G3 stretch occupies residues 446 to 449; sequence DTPG. GTP is bound by residues 446-450 and 500-503; these read DTPGH and NKID. Positions 500-503 are G4; the sequence is NKID. The G5 stretch occupies residues 536–538; it reads SAK.

This sequence belongs to the TRAFAC class translation factor GTPase superfamily. Classic translation factor GTPase family. IF-2 subfamily.

It localises to the cytoplasm. In terms of biological role, one of the essential components for the initiation of protein synthesis. Protects formylmethionyl-tRNA from spontaneous hydrolysis and promotes its binding to the 30S ribosomal subunits. Also involved in the hydrolysis of GTP during the formation of the 70S ribosomal complex. The polypeptide is Translation initiation factor IF-2 (Salmonella schwarzengrund (strain CVM19633)).